Consider the following 179-residue polypeptide: HTH-type transcriptional regulator AldR (179 aa).

The HTH asnC-type domain maps to 32–93; that stretch reads LDEVDRRILS…DIDPVAVGLP (62 aa). The H-T-H motif DNA-binding region spans 51–70; it reads NNALADTVGIAPSTCHGRVR.

As to quaternary structure, homooctamer. Homotetramer. Tetramer of dimers. The N-terminal DNA-binding domains are swapped, forming a dimer, and four dimers are assembled into an octamer through crystal symmetry.

Its activity is regulated as follows. The DNA-binding activity of AldR is modulated by interaction of AldR with various amino acids. Alanine, tryptophan, tyrosine and aspartate completely abolish the DNA binding ability of AldR. On the other hand, glutamate and asparagine reduce AldR binding to DNA but do not completely abolish it. Binding of amino acids can lead to structural modifications and changes in oligomeric association. Activity is also inhibited by 3 small molecule inhibitors, tetrahydroquinoline carbonitrile derivative (S010-0261), levothyroxine and liothyronine, which can disrupt the AldR-DNA complex. Functionally, transcriptional regulator that might play a role under hypoxic conditions. Regulates the expression of ald, which encodes L-alanine dehydrogenase. Serves as both an activator for ald expression in the presence of L-alanine and a repressor in the absence of L-alanine. Acts by binding directly to the upstream region of the ald gene. Four AldR-binding sites (O2, O1, O4 and O3) were identified upstream of the ald gene. O2, O1 and O4 are required for the induction of ald expression by alanine, while O3 is directly involved in the repression of ald expression, by occluding the access of RNA polymerase to the ald promoter. In addition to O3, both O1 and O4 are also necessary for full repression of ald expression in the absence of alanine. In Mycobacterium tuberculosis (strain ATCC 25618 / H37Rv), this protein is HTH-type transcriptional regulator AldR.